Reading from the N-terminus, the 359-residue chain is S-adenosylmethionine:tRNA ribosyltransferase-isomerase (359 aa).

Belongs to the QueA family. As to quaternary structure, monomer.

The protein resides in the cytoplasm. It catalyses the reaction 7-aminomethyl-7-carbaguanosine(34) in tRNA + S-adenosyl-L-methionine = epoxyqueuosine(34) in tRNA + adenine + L-methionine + 2 H(+). The protein operates within tRNA modification; tRNA-queuosine biosynthesis. Functionally, transfers and isomerizes the ribose moiety from AdoMet to the 7-aminomethyl group of 7-deazaguanine (preQ1-tRNA) to give epoxyqueuosine (oQ-tRNA). The sequence is that of S-adenosylmethionine:tRNA ribosyltransferase-isomerase from Synechococcus sp. (strain ATCC 27144 / PCC 6301 / SAUG 1402/1) (Anacystis nidulans).